The primary structure comprises 564 residues: Probable cysteine--tRNA ligase, mitochondrial (564 aa).

A Zn(2+)-binding site is contributed by Cys-78. Residue Gly-79 coordinates L-cysteine. The 'HIGH' region motif lies at 80 to 90 (PTVYDHAHLGH). Position 119 (Thr-119) interacts with L-cysteine. The 'KIIK' region motif lies at 124–127 (KIIK). Positions 257, 282, and 286 each coordinate Zn(2+). Residue His-282 coordinates L-cysteine. The 'KMSKS' region motif lies at 317 to 321 (KMSKS). Lys-320 provides a ligand contact to ATP.

The protein belongs to the class-I aminoacyl-tRNA synthetase family. Zn(2+) is required as a cofactor.

It localises to the mitochondrion. The catalysed reaction is tRNA(Cys) + L-cysteine + ATP = L-cysteinyl-tRNA(Cys) + AMP + diphosphate. It carries out the reaction 2 L-cysteine = S-sulfanyl-L-cysteine + L-alanine. The enzyme catalyses S-sulfanyl-L-cysteine + L-cysteine = S-disulfanyl-L-cysteine + L-alanine. It catalyses the reaction S-sulfanyl-L-cysteine + tRNA(Cys) + ATP = (S)-sulfanyl-L-cysteinyl-tRNA(Cys) + AMP + diphosphate. The catalysed reaction is S-disulfanyl-L-cysteine + tRNA(Cys) + ATP = (S)-disulfanyl-L-cysteinyl-tRNA(Cys) + AMP + diphosphate. Functionally, mitochondrial cysteine-specific aminoacyl-tRNA synthetase that catalyzes the ATP-dependent ligation of cysteine to tRNA(Cys). Its function is as follows. In addition to its role as an aminoacyl-tRNA synthetase, has also cysteine persulfide synthase activity. Produces reactive persulfide species such as cysteine persulfide (CysSSH) from substrate cysteine and mediate direct incorporation of CysSSH into proteins during translations, resulting in protein persulfides and polysulfides. CysSSHs behave as potent antioxidants and cellular protectants. In Homo sapiens (Human), this protein is Probable cysteine--tRNA ligase, mitochondrial.